We begin with the raw amino-acid sequence, 854 residues long: DNA mismatch repair protein MutS (854 aa).

Position 615-622 (615-622 (GPNMGGKS)) interacts with ATP.

It belongs to the DNA mismatch repair MutS family.

Functionally, this protein is involved in the repair of mismatches in DNA. It is possible that it carries out the mismatch recognition step. This protein has a weak ATPase activity. This is DNA mismatch repair protein MutS from Aliivibrio fischeri (strain MJ11) (Vibrio fischeri).